The chain runs to 352 residues: Beta-1,4-xylanase (352 aa).

The signal sequence occupies residues 1–23; it reads MINQRFSILVLLLILLTFSLGFL. Positions 29 to 352 constitute a GH10 domain; it reads GMEIPSLKEV…KKAFWEIVKF (324 aa). Glutamate 155 acts as the Proton donor in catalysis. Residue glutamate 262 is the Nucleophile of the active site.

Belongs to the glycosyl hydrolase 10 (cellulase F) family.

Its subcellular location is the secreted. It catalyses the reaction Endohydrolysis of (1-&gt;4)-beta-D-xylosidic linkages in xylans.. It participates in glycan degradation; xylan degradation. The chain is Beta-1,4-xylanase (xynA) from Dictyoglomus thermophilum.